We begin with the raw amino-acid sequence, 144 residues long: Small polypeptide DEVIL 15 (144 aa).

N-linked (GlcNAc...) asparagine glycosylation occurs at Asn-8. The disordered stretch occupies residues 22-63 (SSSSKPFFTRSFSTKTSSSPSSKSHFTRSFSTKPSSSSSSSD). Residues 104–120 (ILSKKGASVTGKCFKVA) form a helical membrane-spanning segment. The segment at 111-142 (SVTGKCFKVAKEHKSRFYIIKRCVLMLVCWHK) is required for DVL/RTFL small polypeptide activity.

It belongs to the DVL/RTFL small polypeptides family.

It localises to the cell membrane. Its function is as follows. Small polypeptide acting as a regulatory molecule which coordinates cellular responses required for differentiation, growth and development, probably by restricting polar cell proliferation in lateral organs and coordinating socket cell recruitment and differentiation at trichome sites. The chain is Small polypeptide DEVIL 15 from Arabidopsis thaliana (Mouse-ear cress).